Consider the following 145-residue polypeptide: D-aminoacyl-tRNA deacylase (145 aa).

The Gly-cisPro motif, important for rejection of L-amino acids motif lies at 137 to 138 (GP).

The protein belongs to the DTD family. In terms of assembly, homodimer.

The protein resides in the cytoplasm. It carries out the reaction glycyl-tRNA(Ala) + H2O = tRNA(Ala) + glycine + H(+). It catalyses the reaction a D-aminoacyl-tRNA + H2O = a tRNA + a D-alpha-amino acid + H(+). Functionally, an aminoacyl-tRNA editing enzyme that deacylates mischarged D-aminoacyl-tRNAs. Also deacylates mischarged glycyl-tRNA(Ala), protecting cells against glycine mischarging by AlaRS. Acts via tRNA-based rather than protein-based catalysis; rejects L-amino acids rather than detecting D-amino acids in the active site. By recycling D-aminoacyl-tRNA to D-amino acids and free tRNA molecules, this enzyme counteracts the toxicity associated with the formation of D-aminoacyl-tRNA entities in vivo and helps enforce protein L-homochirality. The polypeptide is D-aminoacyl-tRNA deacylase (Salmonella choleraesuis (strain SC-B67)).